The primary structure comprises 139 residues: Type II methyltransferase M.AquIB (139 aa).

In terms of domain architecture, SAM-dependent MTase C5-type spans 1 to 135; it reads MDIKNVHIKN…KAVSEQLLDV (135 aa). Positions 38–58 are disordered; it reads KTFGSTYRRLDPNQPSPTVTR.

Belongs to the class I-like SAM-binding methyltransferase superfamily. C5-methyltransferase family. In terms of assembly, heterodimer of an alpha and a beta subunit.

The catalysed reaction is a 2'-deoxycytidine in DNA + S-adenosyl-L-methionine = a 5-methyl-2'-deoxycytidine in DNA + S-adenosyl-L-homocysteine + H(+). Functionally, a methylase, recognizes the double-stranded sequence 5'-CYCGRG-3', methylates C-1 on both strands, and protects the DNA from cleavage by the AquI endonuclease. The polypeptide is Type II methyltransferase M.AquIB (aquIMB) (Picosynechococcus sp. (strain ATCC 27264 / PCC 7002 / PR-6) (Agmenellum quadruplicatum)).